We begin with the raw amino-acid sequence, 383 residues long: uncharacterized protein (383 aa).

Residues 58-383 form the YcaO domain; sequence GKGATRTQAR…RVGRRIRSSI (326 aa). The disordered stretch occupies residues 80–100; sequence AERKPEDETFTAHPEDCDGLD.

This is an uncharacterized protein from Methanothermobacter thermautotrophicus (strain ATCC 29096 / DSM 1053 / JCM 10044 / NBRC 100330 / Delta H) (Methanobacterium thermoautotrophicum).